The primary structure comprises 124 residues: Small ribosomal subunit protein uS12 (124 aa).

Position 89 is a 3-methylthioaspartic acid (D89).

Belongs to the universal ribosomal protein uS12 family. As to quaternary structure, part of the 30S ribosomal subunit. Contacts proteins S8 and S17. May interact with IF1 in the 30S initiation complex.

Its function is as follows. With S4 and S5 plays an important role in translational accuracy. In terms of biological role, interacts with and stabilizes bases of the 16S rRNA that are involved in tRNA selection in the A site and with the mRNA backbone. Located at the interface of the 30S and 50S subunits, it traverses the body of the 30S subunit contacting proteins on the other side and probably holding the rRNA structure together. The combined cluster of proteins S8, S12 and S17 appears to hold together the shoulder and platform of the 30S subunit. The chain is Small ribosomal subunit protein uS12 from Glaesserella parasuis serovar 5 (strain SH0165) (Haemophilus parasuis).